Here is a 357-residue protein sequence, read N- to C-terminus: MSEEDNRLNELFANDLGVQPPCERSLKEGRRFLNDFEIAAKKKLLELERKALEDKEKNLNFVVESERTLFNSKKRAFDNDECYNDRCKLFRGIVNEWGRSERTLDSLDEPPAWFRREMGEWKKAREEDKAEWKKAREEDKAEWKKAREEDKAEWKKAREEDKAEWKKAREEDKAEWKKAREEDKEWRNSMDEWRKSMDEWRKSMDEWRKSMDEWRKSTDEWRKSTDERLENLLNIVREILDVQRDMRNDLSNLTRKVDRMDMRLSRNNNMIMRSFAQPITEVPFFNGDIPDPNLPRITRIEDIDSLSEENCTRYLKGYGVSYDENDQSLWKRQLAKAVGLTAAYDESYTFSPFSSSE.

Belongs to the UPF0612 family.

The protein resides in the nucleus. Has a role in meiosis. The polypeptide is Meiotically up-regulated gene 135 protein (mug135) (Schizosaccharomyces pombe (strain 972 / ATCC 24843) (Fission yeast)).